The primary structure comprises 137 residues: DNA-directed RNA polymerase I subunit RPA14 (137 aa).

The segment at 100-137 is disordered; sequence PPAQDFSAAPIQVSTTEKKETSIGVSATGGKKTTFADE. A Phosphoserine modification is found at Ser-121.

In terms of assembly, component of the RNA polymerase I (Pol I) complex consisting of 14 subunits: RPA135, RPA190, RPC40, RPA14, RPB5, RPO26, RPA43, RPB8, RPA12, RPB10, RPC19, RPC10, RPA49 and RPA34. The complex is composed of a horseshoe-shaped core containing ten subunits (RPA135, RPA190, RPB5, RPO26, RPB8, RPB10, RPC10, RPA12, RPC19 and RPC40) where RPA135 and RPA190 form the DNA-binding cleft. Outside of the core, RPA14 and RPA43 form the stalk that mediates interactions with transcription initiation factors and newly synthesized RNA. Post-translationally, the N-terminus is blocked.

The protein resides in the nucleus. Its subcellular location is the nucleolus. Functionally, DNA-dependent RNA polymerases catalyze the transcription of DNA into RNA using the four ribonucleoside triphosphates as substrates. Component of RNA polymerase I (Pol I) which synthesizes ribosomal RNA precursors. RPA14 seems to play a role in the stability of subunits RPO26 and RPA43. In vitro, the RPA14-RPA43 subcomplex binds single-stranded RNA. This Saccharomyces cerevisiae (strain ATCC 204508 / S288c) (Baker's yeast) protein is DNA-directed RNA polymerase I subunit RPA14 (RPA14).